The primary structure comprises 154 residues: Protein FAM162A (154 aa).

A required for proapoptotic activity region spans residues 76–102; that stretch reads RFKKEDEIPETVSLEMLDTAKNKMRVK. A helical transmembrane segment spans residues 103–120; the sequence is ISYLMIALTVVGCICMVI.

This sequence belongs to the UPF0389 family. As to quaternary structure, interacts with HSP90AB1; HSP90AB1 is essential for FAM162A mitochondrial localization and pro-apoptotic activity. Interacts with VDAC2; the interaction is probably involved in inducing mitochondrial permeability transition.

It localises to the mitochondrion membrane. In terms of biological role, proposed to be involved in regulation of apoptosis; the exact mechanism may differ between cell types/tissues. May be involved in hypoxia-induced cell death of transformed cells implicating cytochrome C release and caspase activation (such as CASP9) and inducing mitochondrial permeability transition. May be involved in hypoxia-induced cell death of neuronal cells probably by promoting release of AIFM1 from mitochondria to cytoplasm and its translocation to the nucleus; however, the involvement of caspases has been reported conflictingly. This is Protein FAM162A (FAM162A) from Pongo abelii (Sumatran orangutan).